Reading from the N-terminus, the 888-residue chain is Pyruvate dehydrogenase E1 component (888 aa).

In terms of assembly, homodimer. Part of the PDH complex, consisting of multiple copies of pyruvate dehydrogenase (E1), dihydrolipoamide acetyltransferase (E2) and lipoamide dehydrogenase (E3). Thiamine diphosphate serves as cofactor.

The enzyme catalyses N(6)-[(R)-lipoyl]-L-lysyl-[protein] + pyruvate + H(+) = N(6)-[(R)-S(8)-acetyldihydrolipoyl]-L-lysyl-[protein] + CO2. Functionally, component of the pyruvate dehydrogenase (PDH) complex, that catalyzes the overall conversion of pyruvate to acetyl-CoA and CO(2). The polypeptide is Pyruvate dehydrogenase E1 component (aceE) (Buchnera aphidicola subsp. Schizaphis graminum (strain Sg)).